The chain runs to 399 residues: Glucose-1-phosphate adenylyltransferase (399 aa).

Alpha-D-glucose 1-phosphate is bound by residues G158, 174 to 175 (EK), and S192.

This sequence belongs to the bacterial/plant glucose-1-phosphate adenylyltransferase family. As to quaternary structure, homotetramer.

It catalyses the reaction alpha-D-glucose 1-phosphate + ATP + H(+) = ADP-alpha-D-glucose + diphosphate. It functions in the pathway glycan biosynthesis; glycogen biosynthesis. In terms of biological role, involved in the biosynthesis of ADP-glucose, a building block required for the elongation reactions to produce glycogen. Catalyzes the reaction between ATP and alpha-D-glucose 1-phosphate (G1P) to produce pyrophosphate and ADP-Glc. The protein is Glucose-1-phosphate adenylyltransferase of Streptomyces coelicolor (strain ATCC BAA-471 / A3(2) / M145).